The primary structure comprises 276 residues: Undecaprenyl-diphosphatase 1 (276 aa).

Transmembrane regions (helical) follow at residues 43-63 (RAMAFNIIIQLGAILAVVWEF), 85-105 (ANLLIAFLPAVVLGVIFADLI), 109-129 (LFNPITVAAALVVGGIVMLWA), 184-204 (ATEFSFFLAMPTMVGAAVYSG), 214-234 (ADFPVFAIGFVTAFIFAMIAV), and 254-274 (IVFGLVILATWQFGWVDWTAA).

Belongs to the UppP family.

The protein localises to the cell inner membrane. It carries out the reaction di-trans,octa-cis-undecaprenyl diphosphate + H2O = di-trans,octa-cis-undecaprenyl phosphate + phosphate + H(+). Its function is as follows. Catalyzes the dephosphorylation of undecaprenyl diphosphate (UPP). Confers resistance to bacitracin. This Pseudomonas fluorescens (strain Pf0-1) protein is Undecaprenyl-diphosphatase 1.